The primary structure comprises 427 residues: 3-phosphoshikimate 1-carboxyvinyltransferase (427 aa).

K22, S23, and R27 together coordinate 3-phosphoshikimate. K22 is a phosphoenolpyruvate binding site. 2 residues coordinate phosphoenolpyruvate: G94 and R122. 3-phosphoshikimate-binding residues include S165, Q167, D313, and K340. Q167 contacts phosphoenolpyruvate. The active-site Proton acceptor is D313. Phosphoenolpyruvate contacts are provided by R344 and R386.

Belongs to the EPSP synthase family. As to quaternary structure, monomer.

It localises to the cytoplasm. It catalyses the reaction 3-phosphoshikimate + phosphoenolpyruvate = 5-O-(1-carboxyvinyl)-3-phosphoshikimate + phosphate. Its pathway is metabolic intermediate biosynthesis; chorismate biosynthesis; chorismate from D-erythrose 4-phosphate and phosphoenolpyruvate: step 6/7. Catalyzes the transfer of the enolpyruvyl moiety of phosphoenolpyruvate (PEP) to the 5-hydroxyl of shikimate-3-phosphate (S3P) to produce enolpyruvyl shikimate-3-phosphate and inorganic phosphate. The sequence is that of 3-phosphoshikimate 1-carboxyvinyltransferase from Koribacter versatilis (strain Ellin345).